The following is a 416-amino-acid chain: Subtilisin-like protease 12 (416 aa).

A signal peptide spans Met1–Ala19. Positions Ala20–Ala116 are excised as a propeptide. Residues Tyr35 to Val115 enclose the Inhibitor I9 domain. N-linked (GlcNAc...) asparagine glycans are attached at residues Asn123, Asn136, and Asn150. The region spanning Thr125–Ala416 is the Peptidase S8 domain. Active-site charge relay system residues include Asp157 and His188. Residues Asn249, Asn305, Asn334, and Asn353 are each glycosylated (N-linked (GlcNAc...) asparagine). The active-site Charge relay system is the Ser362. 2 N-linked (GlcNAc...) asparagine glycosylation sites follow: Asn404 and Asn412.

The protein belongs to the peptidase S8 family.

It is found in the secreted. Its function is as follows. Secreted subtilisin-like serine protease with keratinolytic activity that contributes to pathogenicity. This Arthroderma benhamiae (strain ATCC MYA-4681 / CBS 112371) (Trichophyton mentagrophytes) protein is Subtilisin-like protease 12 (SUB12).